A 173-amino-acid chain; its full sequence is uncharacterized protein (173 aa).

This is an uncharacterized protein from Rhodospirillum rubrum.